A 64-amino-acid polypeptide reads, in one-letter code: Disintegrin schistatin (64 aa).

Residues 1-64 form the Disintegrin domain; the sequence is NSVHPCCDPV…PDCPRNRYNV (64 aa). 4 disulfide bridges follow: Cys6-Cys29, Cys20-Cys26, Cys25-Cys50, and Cys38-Cys57. A Cell attachment site motif is present at residues 42 to 44; it reads RGD.

The protein belongs to the disintegrin family. Dimeric disintegrin subfamily. In terms of assembly, homodimer; disulfide-linked. As to expression, expressed by the venom gland.

The protein resides in the secreted. May bind to both alpha-IIb/beta-3 (ITGA2B/ITGB3) and alpha-V/beta-3 (ITGAV/ITGB3) integrins, and may inhibit platelet aggregation. The sequence is that of Disintegrin schistatin from Echis carinatus (Saw-scaled viper).